Reading from the N-terminus, the 214-residue chain is Ion-translocating oxidoreductase complex subunit G (214 aa).

A helical membrane pass occupies residues 13–33 (ALLLGLFALVGVGLVALVQQF). Thr180 carries the post-translational modification FMN phosphoryl threonine.

The protein belongs to the RnfG family. As to quaternary structure, the complex is composed of six subunits: RnfA, RnfB, RnfC, RnfD, RnfE and RnfG. FMN serves as cofactor.

Its subcellular location is the cell inner membrane. Its function is as follows. Part of a membrane-bound complex that couples electron transfer with translocation of ions across the membrane. This Pseudomonas aeruginosa (strain UCBPP-PA14) protein is Ion-translocating oxidoreductase complex subunit G.